Reading from the N-terminus, the 262-residue chain is Indole-3-glycerol phosphate synthase (262 aa).

Belongs to the TrpC family.

The catalysed reaction is 1-(2-carboxyphenylamino)-1-deoxy-D-ribulose 5-phosphate + H(+) = (1S,2R)-1-C-(indol-3-yl)glycerol 3-phosphate + CO2 + H2O. The protein operates within amino-acid biosynthesis; L-tryptophan biosynthesis; L-tryptophan from chorismate: step 4/5. The sequence is that of Indole-3-glycerol phosphate synthase from Leptothrix cholodnii (strain ATCC 51168 / LMG 8142 / SP-6) (Leptothrix discophora (strain SP-6)).